The sequence spans 179 residues: Large ribosomal subunit protein uL5 (179 aa).

It belongs to the universal ribosomal protein uL5 family. As to quaternary structure, part of the 50S ribosomal subunit; part of the 5S rRNA/L5/L18/L25 subcomplex. Contacts the 5S rRNA and the P site tRNA. Forms a bridge to the 30S subunit in the 70S ribosome.

Functionally, this is one of the proteins that bind and probably mediate the attachment of the 5S RNA into the large ribosomal subunit, where it forms part of the central protuberance. In the 70S ribosome it contacts protein S13 of the 30S subunit (bridge B1b), connecting the 2 subunits; this bridge is implicated in subunit movement. Contacts the P site tRNA; the 5S rRNA and some of its associated proteins might help stabilize positioning of ribosome-bound tRNAs. The sequence is that of Large ribosomal subunit protein uL5 from Polaromonas naphthalenivorans (strain CJ2).